Reading from the N-terminus, the 233-residue chain is Lipoprotein-releasing system ATP-binding protein LolD (233 aa).

Positions 6–233 constitute an ABC transporter domain; the sequence is LQCDNLCKRY…TAELSLMGAE (228 aa). An ATP-binding site is contributed by 42–49; it reads GSSGSGKS.

It belongs to the ABC transporter superfamily. Lipoprotein translocase (TC 3.A.1.125) family. As to quaternary structure, the complex is composed of two ATP-binding proteins (LolD) and two transmembrane proteins (LolC and LolE).

The protein localises to the cell inner membrane. Part of the ABC transporter complex LolCDE involved in the translocation of mature outer membrane-directed lipoproteins, from the inner membrane to the periplasmic chaperone, LolA. Responsible for the formation of the LolA-lipoprotein complex in an ATP-dependent manner. This is Lipoprotein-releasing system ATP-binding protein LolD from Salmonella choleraesuis (strain SC-B67).